The chain runs to 55 residues: Large ribosomal subunit protein bL33 (55 aa).

It belongs to the bacterial ribosomal protein bL33 family.

The protein is Large ribosomal subunit protein bL33 of Methylobacterium sp. (strain 4-46).